The following is a 282-amino-acid chain: Pantothenate synthetase (282 aa).

Residue 30 to 37 (MGGLHQGH) participates in ATP binding. The active-site Proton donor is the His37. Residue Gln61 coordinates (R)-pantoate. Residue Gln61 coordinates beta-alanine. 146–149 (GQKD) lines the ATP pocket. Gln152 lines the (R)-pantoate pocket. ATP is bound by residues Ile175 and 183 to 186 (MSTR).

This sequence belongs to the pantothenate synthetase family. As to quaternary structure, homodimer.

The protein localises to the cytoplasm. The enzyme catalyses (R)-pantoate + beta-alanine + ATP = (R)-pantothenate + AMP + diphosphate + H(+). It participates in cofactor biosynthesis; (R)-pantothenate biosynthesis; (R)-pantothenate from (R)-pantoate and beta-alanine: step 1/1. Functionally, catalyzes the condensation of pantoate with beta-alanine in an ATP-dependent reaction via a pantoyl-adenylate intermediate. The chain is Pantothenate synthetase from Vesicomyosocius okutanii subsp. Calyptogena okutanii (strain HA).